A 94-amino-acid chain; its full sequence is Venom peptide SjAPI (94 aa).

Residues 1 to 24 form the signal peptide; sequence MKWGALLCIFGFLAFCSVLDRGLG. The propeptide occupies 25 to 30; the sequence is WIPDIW. 5 cysteine pairs are disulfide-bonded: cysteine 33–cysteine 70, cysteine 43–cysteine 66, cysteine 47–cysteine 62, cysteine 51–cysteine 92, and cysteine 72–cysteine 86. The region spanning 33 to 92 is the TIL domain; the sequence is CSSKNEEFQQCGSSCPETCANHKNPEPKSCAAVCFVGCVCKPGFIRDDLKGSICVKPEDC. Residues 63–65 are protease binding loop; sequence AAV.

The protein belongs to the serine protease inhibitor-like (TIL domain-containing) family. As to expression, expressed by the venom gland.

The protein localises to the secreted. Functionally, recombinant protein inhibits both alpha-chymotrypsin (Ki=97.1 nM) and elastase (Ki=3700 nM). The protein is Venom peptide SjAPI of Scorpiops jendeki (Scorpion).